Here is a 73-residue protein sequence, read N- to C-terminus: UPF0154 protein MG335.1 (73 aa).

A helical transmembrane segment spans residues 6–26; that stretch reads LALGLGIPLSLLVGMILGYFI.

Belongs to the UPF0154 family.

Its subcellular location is the membrane. The polypeptide is UPF0154 protein MG335.1 (Mycoplasma genitalium (strain ATCC 33530 / DSM 19775 / NCTC 10195 / G37) (Mycoplasmoides genitalium)).